The sequence spans 296 residues: Release factor glutamine methyltransferase (296 aa).

S-adenosyl-L-methionine-binding positions include 133-137 (GTGSG), aspartate 156, and asparagine 201. Residue 201–204 (NPPY) participates in substrate binding.

This sequence belongs to the protein N5-glutamine methyltransferase family. PrmC subfamily.

It catalyses the reaction L-glutaminyl-[peptide chain release factor] + S-adenosyl-L-methionine = N(5)-methyl-L-glutaminyl-[peptide chain release factor] + S-adenosyl-L-homocysteine + H(+). Functionally, methylates the class 1 translation termination release factors RF1/PrfA and RF2/PrfB on the glutamine residue of the universally conserved GGQ motif. The polypeptide is Release factor glutamine methyltransferase (Rhodopirellula baltica (strain DSM 10527 / NCIMB 13988 / SH1)).